We begin with the raw amino-acid sequence, 220 residues long: Ribonuclease HII (220 aa).

An RNase H type-2 domain is found at 32–220 (KHIAGIDEAG…FAPIKGRFDC (189 aa)). Residues aspartate 38, glutamate 39, and aspartate 130 each coordinate a divalent metal cation.

The protein belongs to the RNase HII family. Mn(2+) is required as a cofactor. Requires Mg(2+) as cofactor.

It is found in the cytoplasm. It carries out the reaction Endonucleolytic cleavage to 5'-phosphomonoester.. Its function is as follows. Endonuclease that specifically degrades the RNA of RNA-DNA hybrids. The protein is Ribonuclease HII of Brucella ovis (strain ATCC 25840 / 63/290 / NCTC 10512).